Reading from the N-terminus, the 250-residue chain is 5-oxoprolinase subunit A (250 aa).

The protein belongs to the LamB/PxpA family. Forms a complex composed of PxpA, PxpB and PxpC.

It carries out the reaction 5-oxo-L-proline + ATP + 2 H2O = L-glutamate + ADP + phosphate + H(+). Catalyzes the cleavage of 5-oxoproline to form L-glutamate coupled to the hydrolysis of ATP to ADP and inorganic phosphate. The sequence is that of 5-oxoprolinase subunit A from Staphylococcus haemolyticus (strain JCSC1435).